The primary structure comprises 141 residues: Transcription antitermination protein NusB (141 aa).

It belongs to the NusB family.

Involved in transcription antitermination. Required for transcription of ribosomal RNA (rRNA) genes. Binds specifically to the boxA antiterminator sequence of the ribosomal RNA (rrn) operons. In Desulfotalea psychrophila (strain LSv54 / DSM 12343), this protein is Transcription antitermination protein NusB.